The primary structure comprises 344 residues: Oxygen sensor histidine kinase NreB (344 aa).

Cys-58, Cys-61, Cys-73, and Cys-76 together coordinate [4Fe-4S] cluster. A Histidine kinase domain is found at 152-344; sequence RISRELHDSV…GTNVTLNIPI (193 aa). Position 158 is a phosphohistidine; by autocatalysis (His-158).

It depends on [4Fe-4S] cluster as a cofactor. In terms of processing, autophosphorylated.

The protein localises to the cytoplasm. It carries out the reaction ATP + protein L-histidine = ADP + protein N-phospho-L-histidine.. In terms of biological role, member of the two-component regulatory system NreB/NreC involved in the control of dissimilatory nitrate/nitrite reduction in response to oxygen. NreB functions as a direct oxygen sensor histidine kinase which is autophosphorylated, in the absence of oxygen, probably at the conserved histidine residue, and transfers its phosphate group probably to a conserved aspartate residue of NreC. NreB/NreC activates the expression of the nitrate (narGHJI) and nitrite (nir) reductase operons, as well as the putative nitrate transporter gene narT. The polypeptide is Oxygen sensor histidine kinase NreB (nreB) (Staphylococcus aureus (strain JH1)).